The chain runs to 160 residues: uncharacterized protein (160 aa).

The Zn(2+) site is built by Cys26, Cys28, Cys50, and His61. A GRF-type; atypical zinc finger spans residues 26–69; sequence CWCGEEIITFTSKTKENPYRRFYRCAIAMKRENEEHLFKWVDEA.

This is an uncharacterized protein from Arabidopsis thaliana (Mouse-ear cress).